The sequence spans 185 residues: UPF0397 protein LJ_1703 (185 aa).

The next 5 membrane-spanning stretches (helical) occupy residues 6 to 26 (GLSVKSVVAIGIGAAIYVILA), 46 to 66 (FLALLATIYGPVVGFSVGFIG), 78 to 98 (TWWSWVLATAVLGLIIGLYGM), 113 to 133 (IGFNIVQIIANVVSWLIIAPV), and 147 to 167 (FLQGATATITNSISILILGTI).

Belongs to the UPF0397 family.

It localises to the cell membrane. This chain is UPF0397 protein LJ_1703, found in Lactobacillus johnsonii (strain CNCM I-12250 / La1 / NCC 533).